Here is a 782-residue protein sequence, read N- to C-terminus: MEKLIQSTISLFISLSLKISTKSYKSIISILFIISLLSIILTTTITVYHDPERIITTTTTTTSASKSVFTASSPKQQDKLQQEIDQHQSDNSHEQQGKRIIIFPNNFPLIKNDQLVKYYIDTMNQALQPHDLIYRNCFEYKIPQLSYSSQKIDVFSDGGGGDQSGIKCRKLSSQVNVKVSPAINKNGNMRQILTRFMQDDGLYFQEFLPFFPNLKEQLQSADDDIINKHWYQFIGSTVWLQQYGVHLMISRIIYTEVDQGLPIISLAYLQLFDRNWNELNDVELIIPDYETTTTTTTQSKYKYKSIIYPYFAPIPIYHNVKQLNTGKFFGVEDPRIMLITNEFGFEEPIIIYNSHHRKISNIDYENGGDNQGKINFKNYRSLFIGWLWKTQIGKFNLEQLPSEHTLDNHKANKNDANNNDYSKNEYIKIKELTRPNNQRNLLEKNWSLFLNHQEKLNHGYHSFIYFIYQFKDLKILKCPLSSSTTKKNNDGDDRFDSGCQWEYQINDDDNFGSGYLHGGTELINVNELLDNYLSKSSTSTSINGKQLTNSIKDRLPLNRQIWIGFARAAMRHCGCSETMYRPNMVILVKDDVPTNTNIASGKSNYRLTHVSSFMDLGIEVLPWWEDKGLCEGKNVVIPNGISSWTIENESNNLESESSTITSNNLVDYLTITITRRDTTIDLVYIKGLLNALLLNPDNNNSNNDVDDTEEGSSIFKSSVLFNVDLVKDYSSTTTTTTTKNVNKNLDCALQYSHKYCQIYGEKLKIEDEFNNKGKDKGKDKSN.

Over 1–26 (MEKLIQSTISLFISLSLKISTKSYKS) the chain is Cytoplasmic. A helical membrane pass occupies residues 27–47 (IISILFIISLLSIILTTTITV). Residues 48 to 782 (YHDPERIITT…GKDKGKDKSN (735 aa)) lie on the Extracellular side of the membrane. The interval 66–96 (KSVFTASSPKQQDKLQQEIDQHQSDNSHEQQ) is disordered. Residues 76 to 96 (QQDKLQQEIDQHQSDNSHEQQ) are compositionally biased toward basic and acidic residues. 3 N-linked (GlcNAc...) asparagine glycosylation sites follow: asparagine 445, asparagine 648, and asparagine 699.

It belongs to the BMT family.

Its subcellular location is the membrane. Beta-mannosyltransferase involved in cell wall biosynthesis through beta-1,2-mannosylation of cell wall phosphopeptidomannan. In Candida albicans (strain SC5314 / ATCC MYA-2876) (Yeast), this protein is Beta-mannosyltransferase 9 (BMT9).